The chain runs to 331 residues: Anthranilate phosphoribosyltransferase (331 aa).

Residues Gly-79, 82 to 83, Ser-87, 89 to 92, 107 to 115, and Ser-119 contribute to the 5-phospho-alpha-D-ribose 1-diphosphate site; these read GD, NIST, and KHCNGNISS. Gly-79 lines the anthranilate pocket. Ser-91 contacts Mg(2+). Residue Asn-110 participates in anthranilate binding. Residue Arg-165 participates in anthranilate binding. The Mg(2+) site is built by Asp-223 and Glu-224.

This sequence belongs to the anthranilate phosphoribosyltransferase family. As to quaternary structure, homodimer. Requires Mg(2+) as cofactor.

The enzyme catalyses N-(5-phospho-beta-D-ribosyl)anthranilate + diphosphate = 5-phospho-alpha-D-ribose 1-diphosphate + anthranilate. It functions in the pathway amino-acid biosynthesis; L-tryptophan biosynthesis; L-tryptophan from chorismate: step 2/5. In terms of biological role, catalyzes the transfer of the phosphoribosyl group of 5-phosphorylribose-1-pyrophosphate (PRPP) to anthranilate to yield N-(5'-phosphoribosyl)-anthranilate (PRA). The sequence is that of Anthranilate phosphoribosyltransferase from Buchnera aphidicola subsp. Baizongia pistaciae (strain Bp).